Reading from the N-terminus, the 634-residue chain is 1-deoxy-D-xylulose-5-phosphate synthase (634 aa).

Residues His-77 and 118–120 (GHA) contribute to the thiamine diphosphate site. A Mg(2+)-binding site is contributed by Asp-149. Residues 150 to 151 (AS), Asn-178, Tyr-289, and Glu-371 contribute to the thiamine diphosphate site. Asn-178 contributes to the Mg(2+) binding site.

This sequence belongs to the transketolase family. DXPS subfamily. As to quaternary structure, homodimer. The cofactor is Mg(2+). Thiamine diphosphate is required as a cofactor.

The enzyme catalyses D-glyceraldehyde 3-phosphate + pyruvate + H(+) = 1-deoxy-D-xylulose 5-phosphate + CO2. The protein operates within metabolic intermediate biosynthesis; 1-deoxy-D-xylulose 5-phosphate biosynthesis; 1-deoxy-D-xylulose 5-phosphate from D-glyceraldehyde 3-phosphate and pyruvate: step 1/1. Its function is as follows. Catalyzes the acyloin condensation reaction between C atoms 2 and 3 of pyruvate and glyceraldehyde 3-phosphate to yield 1-deoxy-D-xylulose-5-phosphate (DXP). This Leptospira interrogans serogroup Icterohaemorrhagiae serovar copenhageni (strain Fiocruz L1-130) protein is 1-deoxy-D-xylulose-5-phosphate synthase.